A 292-amino-acid chain; its full sequence is tRNA-cytidine(32) 2-sulfurtransferase (292 aa).

The PP-loop motif motif lies at 62–67; the sequence is SGGKDS. [4Fe-4S] cluster contacts are provided by cysteine 137, cysteine 140, and cysteine 228.

It belongs to the TtcA family. Homodimer. Requires Mg(2+) as cofactor. [4Fe-4S] cluster serves as cofactor.

It is found in the cytoplasm. The enzyme catalyses cytidine(32) in tRNA + S-sulfanyl-L-cysteinyl-[cysteine desulfurase] + AH2 + ATP = 2-thiocytidine(32) in tRNA + L-cysteinyl-[cysteine desulfurase] + A + AMP + diphosphate + H(+). Its pathway is tRNA modification. In terms of biological role, catalyzes the ATP-dependent 2-thiolation of cytidine in position 32 of tRNA, to form 2-thiocytidine (s(2)C32). The sulfur atoms are provided by the cysteine/cysteine desulfurase (IscS) system. This chain is tRNA-cytidine(32) 2-sulfurtransferase, found in Brucella anthropi (strain ATCC 49188 / DSM 6882 / CCUG 24695 / JCM 21032 / LMG 3331 / NBRC 15819 / NCTC 12168 / Alc 37) (Ochrobactrum anthropi).